Consider the following 522-residue polypeptide: WEB family protein At2g38370 (522 aa).

The segment at 1 to 32 (MAEFPEPGTVNPDSDLSNGRAEKPEIDTSAPF) is disordered. Coiled-coil stretches lie at residues 77 to 264 (ELQR…AARE) and 299 to 376 (ARSA…RSEN). Disordered stretches follow at residues 374-397 (SENG…SRRE) and 458-493 (MSLG…RKRK). Basic and acidic residues predominate over residues 473-486 (TVSKRSEGKENEKR).

Belongs to the WEB family.

In Arabidopsis thaliana (Mouse-ear cress), this protein is WEB family protein At2g38370.